Reading from the N-terminus, the 1039-residue chain is MFSTKSAWLRNGGADQGPRGIALREAVMLLLYFGVPTGPSYNLDPENALLYQGPSGTLFGYSVVLHSHGSKRWLIVGAPTASWLSNASVVNPGAIYRCGIRKNPNQTCEQLQSGSPSGEPCGKTCLEERDNQWLGVTLSRQPGENGSIVTCGHRWKNIFYMKSDNKLPTGICYVMPSDLRTELSKRMAPCYKDYTRKFGENFASCQAGISSFYTQDLIVMGAPGSSYWTGTVFVYNITTNQYKAFVDRQNQVKFGSYLGYSVGAGHFRSPHTTEVVGGAPQHEQIGKAYIFSIDENELNIVYEMKGKKLGSYFGASVCAVDLNADGFSDLLVGAPMQSTIREEGRVFVYINSGMGAVMVEMERVLVGSDKYAARFGESIANLGDIDNDGFEDIAIGAPQEDDLRGAVYIYNGRVDGISSTYSQRIEGQQISKSLRMFGQSISGQIDADNNGYVDVAVGAFQSDSAVLLRTRPVVIVEASLSHPESVNRTKFDCTENGLPSVCMHLTLCFSYKGKEVPGYIVLFYNVSLDVHRKAESPSRFYFFSNGTSDVITGSIRVSSSGEKCRTHQAFMRKDVRDILTPIHVEATYHLGHHVITKRNTEEFPPLQPILQQKKEKDVIRKMINFARFCAYENCSADLQVSAKVGFLKPYENKTYLAVGSMKTIMLNVSLFNAGDDAYETTLNVQLPTGLYFIKILDLEEKQINCEVTESSGIVKLACSLGYIYVDRLSRIDISFLLDVSSLSRAHEDLSISVHASCENEGELDQVRDNRVTLTIPLRYEVMLTVHGLVNPTSFVYGSSEENEPETCMAEKLNLTFHVINTGISMAPNVSVKIMVPNSFLPQDDKLFNVLDVQTTTGQCHFKHYGRECTFAQQKGIAGTLTDIVKFLSKTDKRLLYCMKADQHCLDFLCNFGKMESGKEASVHIQLEGRPSILEMDETSSLKFEIKATAFPEPHPKVIELNKDENVAHVFLEGLHHQRPKRHFTIIIITISLLLGLIVLLLISCVMWKAGFFKRQYKSILQEENRRDSWSYVNSKSNDD.

The signal sequence occupies residues 1 to 40; the sequence is MFSTKSAWLRNGGADQGPRGIALREAVMLLLYFGVPTGPS. At 41-983 the chain is on the extracellular side; that stretch reads YNLDPENALL…LHHQRPKRHF (943 aa). FG-GAP repeat units lie at residues 42–107, 117–184, 193–244, 246–298, 299–358, 362–419, and 423–485; these read NLDP…PNQT, SGEP…TELS, DYTR…QYKA, VDRQ…ENEL, NIVY…GAVM, ERVL…GISS, and QRIE…HPES. Residues Asn-86, Asn-105, and Asn-145 are each glycosylated (N-linked (GlcNAc...) asparagine). Cys-98 and Cys-108 are disulfide-bonded. Cystine bridges form between Cys-151–Cys-172 and Cys-190–Cys-205. A glycan (N-linked (GlcNAc...) asparagine) is linked at Asn-236. Ca(2+)-binding residues include Asp-321, Asn-323, Asp-325, Asp-329, Asp-384, Asp-386, Asp-388, Asp-392, Asp-446, Asp-448, Asn-450, Tyr-452, and Asp-454. Asn-487 carries an N-linked (GlcNAc...) asparagine glycan. Cystine bridges form between Cys-493–Cys-502 and Cys-508–Cys-564. Residues Asn-525 and Asn-545 are each glycosylated (N-linked (GlcNAc...) asparagine). Positions 613–623 match the SG1 motif; sequence KKEKDVIRKMI. Cys-629 and Cys-634 are oxidised to a cystine. Residues Asn-633, Asn-652, and Asn-667 are each glycosylated (N-linked (GlcNAc...) asparagine). A disulfide bridge connects residues Cys-705 and Cys-718. Asn-813 and Asn-828 each carry an N-linked (GlcNAc...) asparagine glycan. Disulfide bonds link Cys-859–Cys-897 and Cys-904–Cys-909. A helical membrane pass occupies residues 984-1007; the sequence is TIIIITISLLLGLIVLLLISCVMW. Residues 1008–1039 lie on the Cytoplasmic side of the membrane; it reads KAGFFKRQYKSILQEENRRDSWSYVNSKSNDD. The GFFKR motif signature appears at 1010–1014; it reads GFFKR. The residue at position 1028 (Ser-1028) is a Phosphoserine.

The protein belongs to the integrin alpha chain family. As to quaternary structure, heterodimer of an alpha and a beta subunit. The alpha subunit can sometimes be cleaved into two non-covalently associated fragments. Alpha-4 associates with either beta-1 or beta-7. Alpha-4 interacts with PXN, LPXN, and TGFB1I1/HIC5. Interacts with CSPG4 through CSPG4 chondroitin sulfate glycosaminoglycan. Interacts with JAML; integrin alpha-4/beta-1 may regulate leukocyte to endothelial cells adhesion by controlling JAML homodimerization. ITGA4:ITGB1 is found in a ternary complex with CX3CR1 and CX3CL1. Interacts with MDK. ITGA4:ITGB1 interacts with MDK; this interaction mediates MDK-induced osteoblast cells migration through PXN phosphorylation. Integrin ITGA4:ITGB1 interacts with SVEP1 (via Sushi domain 21); thereby inhibits Ca(2+) intracellular signaling and as a result represses vasocontraction. ITGA4:ITGB1 interacts with SELP. ITGA4:ITGB1 interacts with BCAM. Post-translationally, phosphorylation on Ser-1028 inhibits PXN binding. In terms of tissue distribution, expressed in the media layer of the arterial wall (at protein level). Weakly expression in the thymus, spleen and mesenteric lymph nodes.

It is found in the membrane. Its function is as follows. Integrins alpha-4/beta-1 (VLA-4 or LPAM-2) and alpha-4/beta-7 (LPAM-1) are receptors for fibronectin. They recognize one or more domains within the alternatively spliced CS-1 and CS-5 regions of fibronectin. They are also receptors for VCAM1. Integrin alpha-4/beta-1 recognizes the sequence Q-I-D-S in VCAM1. Integrin alpha-4/beta-7 is also a receptor for MADCAM1. It recognizes the sequence L-D-T in MADCAM1. On activated endothelial cells integrin VLA-4 triggers homotypic aggregation for most VLA-4-positive leukocyte cell lines. It may also participate in cytolytic T-cell interactions with target cells. ITGA4:ITGB1 binds to fractalkine (CX3CL1) and may act as its coreceptor in CX3CR1-dependent fractalkine signaling. ITGA4:ITGB1 binds to PLA2G2A via a site (site 2) which is distinct from the classical ligand-binding site (site 1) and this induces integrin conformational changes and enhanced ligand binding to site 1. Integrin ITGA4:ITGB1 represses PRKCA-mediated L-type voltage-gated channel Ca(2+) influx and ROCK-mediated calcium sensitivity in vascular smooth muscle cells via its interaction with SVEP1, thereby inhibiting vasocontraction. The protein is Integrin alpha-4 (Itga4) of Mus musculus (Mouse).